A 368-amino-acid chain; its full sequence is Spore germination protein B2 (368 aa).

10 consecutive transmembrane segments (helical) span residues 10 to 30, 43 to 63, 82 to 102, 120 to 140, 145 to 165, 187 to 207, 217 to 237, 282 to 302, 308 to 328, and 338 to 358; these read FMQTLIMISSTLIGAGVLTLP, LMILLQGVIFIIIVLLFLPFL, FIGFLLNLYICLYFIGIVCFQ, MAVVVFIFLAVAIYHVGGGVY, VYAYIFPITLIIFMMLLMFSF, LFPKTLLYFSGFEIIFYLVPF, AVALGIATSTLFYSITLLIVI, FACMLGSFKGAHIGLTEIFHL, AWLLTAMLAATFFITMYPKDL, and LGYAFLIVITIPFFVWFLSWI.

Belongs to the amino acid-polyamine-organocation (APC) superfamily. Spore germination protein (SGP) (TC 2.A.3.9) family.

It localises to the cell membrane. In terms of biological role, involved in the response to the germinative mixture of L-asparagine, glucose, fructose and potassium ions (AGFK). Could be an amino acid transporter. Cannot stimulate germination in the absence of gerD and gerK gene products (fructose and glucose receptors, respectively). In Bacillus subtilis (strain 168), this protein is Spore germination protein B2 (gerBB).